Consider the following 228-residue polypeptide: Hematopoietically-expressed homeobox protein hhex (228 aa).

The segment at residues Arg-117–Lys-176 is a DNA-binding region (homeobox). The interval Leu-175 to Leu-228 is disordered. Positions Gly-184–Glu-207 are enriched in basic and acidic residues. A compositionally biased stretch (acidic residues) spans Asp-213–Asp-222.

Expressed in embryonic endothelial and blood lineages. From late-blastula stage, expression is restricted to the dorsal marginal region of the extraembryonic yolk syncytial layer (YSL). By the onset of gastrulation, expressed in the entire dorsal half of the YSL. Post-gastrulation, expression appears in both anterior and posterior lateral plate mesoderm by the 3-somite stage. Posteriorly, expression is in the intermediate cell mass (ICM), which contains both endothelial and blood precursors. Subsequently expressed in the developing endothelial cells including the endocardium until the onset of circulation (24 hpf) and disappears completely by 30 hpf, at which point expression is seen in the thyroid and liver primordia. Also expressed in the developing biliary tree and pancreas.

The protein resides in the nucleus. Its function is as follows. Recognizes the DNA sequence 5'-ATTAA-3'. Transcriptional repressor. Regulates the differentiation of both endothelial and blood cells. Plays a role in embryonic dorsoventral patterning by regulating bmp expression. May establish anterior identity. Functions in the embryo to regulate liver development. Functions extraembryonically to generate organ chirality. The chain is Hematopoietically-expressed homeobox protein hhex from Danio rerio (Zebrafish).